Here is a 396-residue protein sequence, read N- to C-terminus: L-lactate dehydrogenase (396 aa).

The region spanning 1-380 is the FMN hydroxy acid dehydrogenase domain; that stretch reads MIISAASDYR…TQDSLVQGLG (380 aa). Tyrosine 24 contacts substrate. FMN contacts are provided by serine 106 and glutamine 127. Tyrosine 129 contacts substrate. An FMN-binding site is contributed by threonine 155. Arginine 164 is a binding site for substrate. Residue lysine 251 participates in FMN binding. The Proton acceptor role is filled by histidine 275. Arginine 278 is a binding site for substrate. 306-330 is a binding site for FMN; that stretch reads DSGIRNGLDVVRMIALGADTVLLGR.

It belongs to the FMN-dependent alpha-hydroxy acid dehydrogenase family. It depends on FMN as a cofactor.

Its subcellular location is the cell inner membrane. It catalyses the reaction (S)-lactate + A = pyruvate + AH2. Catalyzes the conversion of L-lactate to pyruvate. Is coupled to the respiratory chain. The sequence is that of L-lactate dehydrogenase from Shigella flexneri serotype 5b (strain 8401).